Consider the following 109-residue polypeptide: Nucleoid-associated protein BCB4264_A0025 (109 aa).

The protein belongs to the YbaB/EbfC family. Homodimer.

Its subcellular location is the cytoplasm. The protein localises to the nucleoid. Its function is as follows. Binds to DNA and alters its conformation. May be involved in regulation of gene expression, nucleoid organization and DNA protection. This chain is Nucleoid-associated protein BCB4264_A0025, found in Bacillus cereus (strain B4264).